A 332-amino-acid chain; its full sequence is Adenosine deaminase (332 aa).

Residues histidine 12 and histidine 14 each coordinate Zn(2+). Substrate contacts are provided by histidine 14, aspartate 16, and glycine 170. Position 197 (histidine 197) interacts with Zn(2+). Glutamate 200 (proton donor) is an active-site residue. A Zn(2+)-binding site is contributed by aspartate 278.

It belongs to the metallo-dependent hydrolases superfamily. Adenosine and AMP deaminases family. Adenosine deaminase subfamily. It depends on Zn(2+) as a cofactor.

The enzyme catalyses adenosine + H2O + H(+) = inosine + NH4(+). It carries out the reaction 2'-deoxyadenosine + H2O + H(+) = 2'-deoxyinosine + NH4(+). Its function is as follows. Catalyzes the hydrolytic deamination of adenosine and 2-deoxyadenosine. The protein is Adenosine deaminase of Clostridium perfringens (strain ATCC 13124 / DSM 756 / JCM 1290 / NCIMB 6125 / NCTC 8237 / Type A).